The following is a 449-amino-acid chain: Delta(8)-fatty-acid desaturase 2 (449 aa).

The 85-residue stretch at 7–91 (KRYVTSEDLK…VRDHHVSDVS (85 aa)) folds into the Cytochrome b5 heme-binding domain. H42 and H65 together coordinate heme. 2 consecutive transmembrane segments (helical) span residues 113-133 (VTLY…YGVL) and 138-158 (IWAH…SAYV). Positions 160–164 (HDSGH) match the Histidine box-1 motif. Residues 176–196 (LIQLLSGNCLTGISIAWWKWT) form a helical membrane-spanning segment. The Histidine box-2 signature appears at 197 to 201 (HNAHH). Transmembrane regions (helical) follow at residues 255–275 (FYPV…LLLF), 284–304 (ALNI…VSFL), and 311–331 (FIFV…FCLN). Residues 374–378 (QLEHH) carry the Histidine box-3 motif.

It belongs to the fatty acid desaturase type 1 family. Fe cation is required as a cofactor. In terms of tissue distribution, highly expressed in flowers and siliques. Expressed at low levels in roots, leaves and stems.

Its subcellular location is the endoplasmic reticulum membrane. The catalysed reaction is an N-acyl-(4R)-4-hydroxysphinganine + 2 Fe(II)-[cytochrome b5] + O2 + 2 H(+) = a (4R,8E)-4-hydroxysphingenine ceramide + 2 Fe(III)-[cytochrome b5] + 2 H2O. It catalyses the reaction an N-acyl-(4R)-4-hydroxysphinganine + 2 Fe(II)-[cytochrome b5] + O2 + 2 H(+) = a (4R,8Z)-4-hydroxysphing-8-enine ceramide + 2 Fe(III)-[cytochrome b5] + 2 H2O. Its function is as follows. Plays a major role as delta(8)-fatty-acid desaturase which introduces a double bond at the 8-position in the long-chain base (LCB) of ceramides with or without a hydroxy group at the 4-position. The enzyme produces both the 8E and 8Z isomers (in a 4:1 ratio). This structural modification contributes to the quantitative partitioning of ceramides between the two major sphingolipid classes, glucosylceramides and glycosylinositolphosphoryl ceramides. Sphingolipids are important membrane components involved in environmental stress responses, such as resistance to chilling, and act as cell signaling molecules. The sequence is that of Delta(8)-fatty-acid desaturase 2 (SLD2) from Arabidopsis thaliana (Mouse-ear cress).